The sequence spans 85 residues: Elongation factor 1-beta (85 aa).

It belongs to the EF-1-beta/EF-1-delta family.

Its function is as follows. Promotes the exchange of GDP for GTP in EF-1-alpha/GDP, thus allowing the regeneration of EF-1-alpha/GTP that could then be used to form the ternary complex EF-1-alpha/GTP/AAtRNA. This Methanoregula boonei (strain DSM 21154 / JCM 14090 / 6A8) protein is Elongation factor 1-beta.